The following is a 526-amino-acid chain: Bifunctional purine biosynthesis protein PurH (526 aa).

One can recognise an MGS-like domain in the interval 1–145 (MSKAPLALLS…KNHAHVGIVT (145 aa)).

The protein belongs to the PurH family.

It carries out the reaction (6R)-10-formyltetrahydrofolate + 5-amino-1-(5-phospho-beta-D-ribosyl)imidazole-4-carboxamide = 5-formamido-1-(5-phospho-D-ribosyl)imidazole-4-carboxamide + (6S)-5,6,7,8-tetrahydrofolate. It catalyses the reaction IMP + H2O = 5-formamido-1-(5-phospho-D-ribosyl)imidazole-4-carboxamide. Its pathway is purine metabolism; IMP biosynthesis via de novo pathway; 5-formamido-1-(5-phospho-D-ribosyl)imidazole-4-carboxamide from 5-amino-1-(5-phospho-D-ribosyl)imidazole-4-carboxamide (10-formyl THF route): step 1/1. It functions in the pathway purine metabolism; IMP biosynthesis via de novo pathway; IMP from 5-formamido-1-(5-phospho-D-ribosyl)imidazole-4-carboxamide: step 1/1. The chain is Bifunctional purine biosynthesis protein PurH from Psychrobacter arcticus (strain DSM 17307 / VKM B-2377 / 273-4).